Here is a 338-residue protein sequence, read N- to C-terminus: MSPSIAMFTLTPNARALASKTSKMDLIKNLRERTGAPIVDVKAALTAHDYDSEAAYDALRAKGLAAAAKKAGRTSADGAVAALSGDRGVVLFEVNSETDFVARGESFQSLIKECAEATLRAVESDRAMTEEHGTATAGALRALRDERIGELLTSDGKPLSDAVRDVAVHVRENVRLRRAFAYAATVGAGEVIGTYVHGALAPGVGKQAACVVAKGVSEEFANKLAMHVVASSPLYLRSDCVPTDVMERELAVFRTQTEGSGKPANIVEKILAGRMNKYYEEVCLENQKFILDDSMTVEKAVKAEGGELVAFSRVKVGEGIEVEEKDFAAEVAEAVRTT.

The transit peptide at 1 to 42 (MSPSIAMFTLTPNARALASKTSKMDLIKNLRERTGAPIVDVK) directs the protein to the mitochondrion.

The protein belongs to the EF-Ts family.

It localises to the mitochondrion. Functionally, associates with the EF-Tu.GDP complex and induces the exchange of GDP to GTP. It remains bound to the aminoacyl-tRNA.EF-Tu.GTP complex up to the GTP hydrolysis stage on the ribosome. This chain is Elongation factor Ts, mitochondrial, found in Ostreococcus tauri.